Consider the following 860-residue polypeptide: Eukaryotic translation initiation factor 3 subunit C (860 aa).

A disordered region spans residues 1–79 (MSSRFFHGGS…ESDEEEDRVT (79 aa)). Acidic residues-rich tracts occupy residues 16–53 (SSDEEELYSDRDEEEVSDEEEETTSEEESSEEESDDEA) and 67–76 (DLDESDEEED). The 175-residue stretch at 598 to 772 (FHMHINLELL…NAIVFRKGVE (175 aa)) folds into the PCI domain. The tract at residues 808-860 (AFQRDQGPGGRLGRGQGRGGQRTAGGRPPIGGQQRRPGGQQFSGGALGGAIKA) is disordered. Residues 814–830 (GPGGRLGRGQGRGGQRT) are compositionally biased toward gly residues. A compositionally biased stretch (low complexity) spans 831 to 847 (AGGRPPIGGQQRRPGGQ). The span at 848 to 860 (QFSGGALGGAIKA) shows a compositional bias: gly residues.

The protein belongs to the eIF-3 subunit C family. In terms of assembly, component of the eukaryotic translation initiation factor 3 (eIF-3) complex.

It localises to the cytoplasm. In terms of biological role, component of the eukaryotic translation initiation factor 3 (eIF-3) complex, which is involved in protein synthesis of a specialized repertoire of mRNAs and, together with other initiation factors, stimulates binding of mRNA and methionyl-tRNAi to the 40S ribosome. The eIF-3 complex specifically targets and initiates translation of a subset of mRNAs involved in cell proliferation. The sequence is that of Eukaryotic translation initiation factor 3 subunit C from Coccidioides immitis (strain RS) (Valley fever fungus).